We begin with the raw amino-acid sequence, 197 residues long: Molybdenum cofactor guanylyltransferase (197 aa).

Residues 12 to 14, K25, N53, D71, and D101 contribute to the GTP site; that span reads LAG. Residue D101 coordinates Mg(2+).

The protein belongs to the MobA family. As to quaternary structure, monomer. It depends on Mg(2+) as a cofactor.

The protein localises to the cytoplasm. It catalyses the reaction Mo-molybdopterin + GTP + H(+) = Mo-molybdopterin guanine dinucleotide + diphosphate. Transfers a GMP moiety from GTP to Mo-molybdopterin (Mo-MPT) cofactor (Moco or molybdenum cofactor) to form Mo-molybdopterin guanine dinucleotide (Mo-MGD) cofactor. This is Molybdenum cofactor guanylyltransferase from Bordetella pertussis (strain Tohama I / ATCC BAA-589 / NCTC 13251).